The chain runs to 452 residues: Tubulin alpha-1 chain (452 aa).

Gln11 is a GTP binding site. Lys40 carries the post-translational modification N6-acetyllysine. Residues Glu71, Ser140, Gly144, Thr145, Thr179, Asn206, and Asn228 each coordinate GTP. Residue Glu71 coordinates Mg(2+). Glu254 is a catalytic residue. The tract at residues 433-452 (EEVGVDSADAEGEEEEGDEY) is disordered.

Belongs to the tubulin family. As to quaternary structure, dimer of alpha and beta chains. A typical microtubule is a hollow water-filled tube with an outer diameter of 25 nm and an inner diameter of 15 nM. Alpha-beta heterodimers associate head-to-tail to form protofilaments running lengthwise along the microtubule wall with the beta-tubulin subunit facing the microtubule plus end conferring a structural polarity. Microtubules usually have 13 protofilaments but different protofilament numbers can be found in some organisms and specialized cells. It depends on Mg(2+) as a cofactor. In terms of processing, undergoes a tyrosination/detyrosination cycle, the cyclic removal and re-addition of a C-terminal tyrosine residue by the enzymes tubulin tyrosine carboxypeptidase (TTCP) and tubulin tyrosine ligase (TTL), respectively. Post-translationally, acetylation of alpha chains at Lys-40 stabilizes microtubules and affects affinity and processivity of microtubule motors. This modification has a role in multiple cellular functions, ranging from cell motility, cell cycle progression or cell differentiation to intracellular trafficking and signaling.

Its subcellular location is the cytoplasm. It is found in the cytoskeleton. It carries out the reaction GTP + H2O = GDP + phosphate + H(+). Its function is as follows. Tubulin is the major constituent of microtubules, a cylinder consisting of laterally associated linear protofilaments composed of alpha- and beta-tubulin heterodimers. Microtubules grow by the addition of GTP-tubulin dimers to the microtubule end, where a stabilizing cap forms. Below the cap, tubulin dimers are in GDP-bound state, owing to GTPase activity of alpha-tubulin. The polypeptide is Tubulin alpha-1 chain (Paracentrotus lividus (Common sea urchin)).